A 494-amino-acid polypeptide reads, in one-letter code: ATP synthase subunit beta, plastid (494 aa).

An ATP-binding site is contributed by 169 to 176; it reads GGAGVGKT.

The protein belongs to the ATPase alpha/beta chains family. In terms of assembly, F-type ATPases have 2 components, CF(1) - the catalytic core - and CF(0) - the membrane proton channel. CF(1) has five subunits: alpha(3), beta(3), gamma(1), delta(1), epsilon(1). CF(0) has four main subunits: a(1), b(1), b'(1) and c(9-12).

It is found in the plastid membrane. The enzyme catalyses ATP + H2O + 4 H(+)(in) = ADP + phosphate + 5 H(+)(out). Produces ATP from ADP in the presence of a proton gradient across the membrane. The catalytic sites are hosted primarily by the beta subunits. This Cuscuta sandwichiana (Kauna'oa) protein is ATP synthase subunit beta, plastid (atpB).